A 542-amino-acid polypeptide reads, in one-letter code: Putative selenium-binding protein (542 aa).

The protein belongs to the selenium-binding protein family.

The chain is Putative selenium-binding protein from Caenorhabditis elegans.